The primary structure comprises 687 residues: Ferric transport system permease protein FbpB (687 aa).

The next 19 helical transmembrane spans lie at 10-30 (LFES…ALPS), 50-70 (GWSS…FWLL), 85-105 (LGLI…YKVS), 106-126 (MGYS…FAFA), 141-161 (LLSI…AIFI), 192-212 (LFLS…FALY), 226-246 (IFSI…VTLM), 271-291 (GFNG…FMIL), 318-338 (YNII…IVFI), 347-367 (PLVL…YIAG), 378-398 (LGSM…MWIG), 425-445 (IIVM…SIFY), 450-472 (VNWG…QGLS), 484-504 (IYAG…AYIV), 517-537 (FLTM…YILA), 538-558 (FNDA…SMVM), 594-614 (IWFI…VTSF), 620-640 (TVSA…AYIL), and 649-669 (GVAI…ILFF). The ABC transmembrane type-1 1 domain occupies 188–393 (ISNSLFLSGF…IFSLLIFIVQ (206 aa)). The 191-residue stretch at 479–669 (LINTMIYAGI…VVMMAIILFF (191 aa)) folds into the ABC transmembrane type-1 2 domain.

Belongs to the binding-protein-dependent transport system permease family. FbpB subfamily. As to quaternary structure, the complex is composed of two ATP-binding proteins (FbpC), two transmembrane proteins (FbpB) and a solute-binding protein (FbpA).

Its subcellular location is the cell inner membrane. Part of the ABC transporter complex FbpABC (TC 3.A.1.10.1) involved in Fe(3+) ions import. Probably responsible for the translocation of the substrate across the membrane. This is Ferric transport system permease protein FbpB (fbpB) from Actinobacillus pleuropneumoniae (Haemophilus pleuropneumoniae).